Consider the following 299-residue polypeptide: ATP phosphoribosyltransferase (299 aa).

Belongs to the ATP phosphoribosyltransferase family. Long subfamily. Equilibrium between an active dimeric form, an inactive hexameric form and higher aggregates. Interconversion between the various forms is largely reversible and is influenced by the natural substrates and inhibitors of the enzyme. Mg(2+) serves as cofactor.

It is found in the cytoplasm. The catalysed reaction is 1-(5-phospho-beta-D-ribosyl)-ATP + diphosphate = 5-phospho-alpha-D-ribose 1-diphosphate + ATP. It functions in the pathway amino-acid biosynthesis; L-histidine biosynthesis; L-histidine from 5-phospho-alpha-D-ribose 1-diphosphate: step 1/9. Feedback inhibited by histidine. Functionally, catalyzes the condensation of ATP and 5-phosphoribose 1-diphosphate to form N'-(5'-phosphoribosyl)-ATP (PR-ATP). Has a crucial role in the pathway because the rate of histidine biosynthesis seems to be controlled primarily by regulation of HisG enzymatic activity. This chain is ATP phosphoribosyltransferase, found in Buchnera aphidicola subsp. Acyrthosiphon pisum (strain 5A).